Consider the following 394-residue polypeptide: MRMPTNLQHPNMTAIASLPRSQNALKIVSPNTFHVDANAPLPTLVDHDSVLIRVVCVAINPVDGKSADLSATAGATSGTDFAGIVVALPPDTNSEPDDDALKIGDRVMGFVFGNNPQGRDNGAFAEYVTVPRRLLWRLPAHMSLETAASLPASLASVGMAMHYLQIPLSSLQSAISKSIASSSAAAAADDEGPFVLVYGGGTSTGCMAIQILRLAGFVPVTCCSSSSAARALSLGAAATFDYASATCGRDVREHTHDSLALAIDCISDSASMSICYEAIGGGGGRYVALDPFPVRGCVRRSVVPDWICTLTQFGRPVAWAPPYNIDERPGDRRFAEEWYRLAQRMLDAHVIRAPTLETRTGGLASVPEGISEVRMGEVKRKKLVYNIVEQKAAA.

Residue 62–65 (VDGK) coordinates NADP(+). 152 to 159 (ASLASVGM) is a substrate binding site. NADP(+) contacts are provided by residues 224–227 (SSSS), Tyr-242, and 289–290 (LD). Residue 309 to 313 (TLTQF) participates in substrate binding. 378 to 379 (VK) serves as a coordination point for NADP(+).

It belongs to the zinc-containing alcohol dehydrogenase family. Monomer.

The protein operates within secondary metabolite biosynthesis. In terms of biological role, trans-enoyl reductase; part of the gene cluster that mediates the biosynthesis of fumosorinone, a 2-pyridone alkaloid that acts as an inhibitor of protein tyrosine phosphatase 1B which is implicated asa negative regulator of insulin receptor signaling and a potential drug target for the treatment of type II diabetes and other associated metabolic syndromes. The polyketide-amino acid backbone of fumosorinone is first assembled by the PKS-NRPS hybrid fumoS. The PKS modules condense one acetyl-CoA starter unit with 7 malonyl-CoA units, programmed C-methylations occurring after the first 3 and the sixth extensions, and cycles of full reduction occurring after the first 2 extensions. Because fumoS lacks a designated enoyl reductase (ER) domain, the required activity is provided the enoyl reductase fumoC. Upon formation of the polyketide backbone on the thiotemplate, the polyketide is transferred to the NRPS module and linked to tyrosine to produce the acyltetramic acid intermediate called prefumosorinone A. The cytochrome P450 monooxygenase fumoA then probably catalyzes an unprecedented oxidative ring expansion of prefumosorinone A to form prefumosorinone B which contains the 2-pyridone core of fumosorinone. The cytochrome P450 monooxygenase fumoB might hydroxylate the nitrogen of prefumosorinone B, but not the acyltetramic acid prefumosorinone A, to form fumosorinone. The protein is Trans-enoyl reductase fumoC of Cordyceps fumosorosea (strain ARSEF 2679) (Isaria fumosorosea).